A 342-amino-acid chain; its full sequence is Glucan endo-1,3-beta-glucosidase (342 aa).

Positions 1–26 are cleaved as a signal peptide; it reads MLASSPMLLFLLSLLMAYNFDTTAGQ. The active-site Proton donor is the glutamate 119. The active-site Nucleophile is glutamate 261.

It belongs to the glycosyl hydrolase 17 family. The N-terminus is blocked.

It is found in the vacuole. It catalyses the reaction Hydrolysis of (1-&gt;3)-beta-D-glucosidic linkages in (1-&gt;3)-beta-D-glucans.. Functionally, is thought to be an important plant defense-related product against fungal pathogens. Accumulation of the glucanase can be detected as early as 4 hours after inoculation. The chain is Glucan endo-1,3-beta-glucosidase (BGL) from Brassica campestris (Field mustard).